Consider the following 790-residue polypeptide: Exocyst complex component SEC15A (790 aa).

The stretch at 49-70 (LVHQLKNVARKKEAEIEDLCKT) forms a coiled coil.

Belongs to the SEC15 family. As to quaternary structure, the exocyst complex is composed of SEC3, SEC5, SEC6, SEC8, SEC10, EXO70A1 and EXO84B.

The protein resides in the cytoplasm. Its subcellular location is the cytosol. Its function is as follows. Component of the exocyst complex involved in the docking of exocytic vesicles with fusion sites on the plasma membrane during regulated or polarized secretion. Involved in polarized cell growth and organ morphogenesis. During cytokinesis, involved in cell plate initiation, cell plate maturation and formation of new primary cell wall. This Arabidopsis thaliana (Mouse-ear cress) protein is Exocyst complex component SEC15A (SEC15A).